The chain runs to 1338 residues: Aldehyde oxidase 1 (1338 aa).

The 88-residue stretch at 5–92 (SELLFYVNGR…GTAVTTVEGI (88 aa)) folds into the 2Fe-2S ferredoxin-type domain. Residues Q113 and C151 each coordinate Mo-molybdopterin. An FAD-binding PCMH-type domain is found at 236–421 (FGSERMMWFS…VSVNIPYSRK (186 aa)). Residues 264–271 (VIMGNTSV), A345, S354, H358, D367, and L411 contribute to the FAD site. Mo-molybdopterin is bound by residues 806–807 (AF) and M1047. S1068 carries the post-translational modification Phosphoserine. Mo-molybdopterin contacts are provided by residues 1088-1091 (GSVV), Q1203, and L1268. E1270 functions as the Proton acceptor; for azaheterocycle hydroxylase activity in the catalytic mechanism.

The protein belongs to the xanthine dehydrogenase family. Homodimer. The cofactor is [2Fe-2S] cluster. FAD serves as cofactor. Mo-molybdopterin is required as a cofactor. In terms of tissue distribution, detected at high levels in liver, also detected in lung, kidney, lacrimal gland and olfactory mucosa.

The protein resides in the cytoplasm. The enzyme catalyses an aldehyde + O2 + H2O = a carboxylate + H2O2 + H(+). The catalysed reaction is retinal + O2 + H2O = retinoate + H2O2 + H(+). Oxidase with broad substrate specificity, oxidizing aromatic azaheterocycles, such as N1-methylnicotinamide, N-methylphthalazinium and phthalazine, as well as aldehydes, such as benzaldehyde, retinal, pyridoxal, and vanillin. Plays a key role in the metabolism of xenobiotics and drugs containing aromatic azaheterocyclic substituents. Participates in the bioactivation of prodrugs such as famciclovir, catalyzing the oxidation step from 6-deoxypenciclovir to penciclovir, which is a potent antiviral agent. Is probably involved in the regulation of reactive oxygen species homeostasis. May be a prominent source of superoxide generation via the one-electron reduction of molecular oxygen. May also catalyze nitric oxide (NO) production via the reduction of nitrite to NO with NADH or aldehyde as electron donor. May play a role in adipogenesis. In Macaca fascicularis (Crab-eating macaque), this protein is Aldehyde oxidase 1 (AOX1).